Consider the following 671-residue polypeptide: MKPPAGMVFLWVLTSLGAGIGAKIVKEGNPHQVYTLTWQIYSQSGEVVWEVQGNHALNTWWPALTPDFCQLAAGLDTWDIPDRSPKNLETSMEGTSQQLTPQGCSKPWKRCALTERDFYVCPRDNRDRATAHRCGGYEEYFCSAWGCETTGDAYWQPTSTWDLITITRNYTKPDSCDDRVERERKTSRHWRDPLSLPLKITFTDSGKRALGWQTGYTWGLRWYLPGKDRGIILKIKLKIDTITQTVGPNLVLADQKTPVQLAIPVQPPRAPTQTPRVNPVNSTLSPSLGYPAPAPGPRPPYPTSPSRPGTGDRLLNLVQGVYLTLNLTAPNQTQDCWLCLTAKPPYYQGVAIIGNFTNHTNAPLRCSTTPRHGLTLTEVTGYGLCIGKIPPSHQNLCSQTVPSVGQGPYYLTAPNGTYWVCNTGLTPCISLQILNDTADYCILIELWPKIFYHDSEYIYGHYEPGGRFRRDPVSLTVALLLGGLTMGSLAAGIGTGTAALIETNQFKQLQIAMHSDIQALEESISALERSLISLSEVVLQNRRGLDLLFLQEGGLCAALKEECCFYADHTGIVRDSMAKLRERFKQRQKLFESQQGWFEGWYNKSPWFTTLVSSLMVPLILLLLILMFGPCILNHLLQFIRERLSVIQALVLTQQYHQLRQFDAERPDAIE.

The first 22 residues, 1–22 (MKPPAGMVFLWVLTSLGAGIGA), serve as a signal peptide directing secretion. The Extracellular segment spans residues 23–611 (KIVKEGNPHQ…YNKSPWFTTL (589 aa)). Intrachain disulfides connect C121–C142 and C134–C147. Residues N169 and N281 are each glycosylated (N-linked (GlcNAc...) asparagine; by host). The tract at residues 265 to 310 (VQPPRAPTQTPRVNPVNSTLSPSLGYPAPAPGPRPPYPTSPSRPGT) is disordered. A compositionally biased stretch (polar residues) spans 271 to 286 (PTQTPRVNPVNSTLSP). Pro residues predominate over residues 292–305 (APAPGPRPPYPTSP). N326 and N331 each carry an N-linked (GlcNAc...) asparagine; by host glycan. Positions 336 to 339 (CWLC) match the CXXC motif. Residues N355, N358, N415, and N435 are each glycosylated (N-linked (GlcNAc...) asparagine; by host). The interval 473-493 (VSLTVALLLGGLTMGSLAAGI) is fusion peptide. Coiled coils occupy residues 501–550 (IETN…LLFL) and 560–596 (KEEC…SQQG). An immunosuppression region spans residues 539–555 (LQNRRGLDLLFLQEGGL). Positions 556–564 (CAALKEECC) match the CX6CC motif. Residues 612-632 (VSSLMVPLILLLLILMFGPCI) traverse the membrane as a helical segment. C631 is lipidated: S-palmitoyl cysteine; by host. Over 633-671 (LNHLLQFIRERLSVIQALVLTQQYHQLRQFDAERPDAIE) the chain is Cytoplasmic. Positions 656–659 (YHQL) match the YXXL motif; contains endocytosis signal motif.

In terms of assembly, the mature envelope protein (Env) consists of a trimer of SU-TM heterodimers attached by noncovalent interactions or by a labile interchain disulfide bond. Post-translationally, specific enzymatic cleavages in vivo yield mature proteins. Envelope glycoproteins are synthesized as an inactive precursor that is N-glycosylated and processed likely by host cell furin or by a furin-like protease in the Golgi to yield the mature SU and TM proteins. The cleavage site between SU and TM requires the minimal sequence [KR]-X-[KR]-R. The R-peptide is released from the C-terminus of the cytoplasmic tail of the TM protein upon particle formation as a result of proteolytic cleavage by the viral protease. Cleavage of this peptide is required for TM to become fusogenic. The transmembrane protein is palmitoylated. In terms of processing, the R-peptide is palmitoylated.

It is found in the virion membrane. Its subcellular location is the host cell membrane. In terms of biological role, the surface protein (SU) attaches the virus to the host cell by binding to its receptor. This interaction triggers the refolding of the transmembrane protein (TM) and is thought to activate its fusogenic potential by unmasking its fusion peptide. Fusion occurs at the host cell plasma membrane. Functionally, the transmembrane protein (TM) acts as a class I viral fusion protein. Under the current model, the protein has at least 3 conformational states: pre-fusion native state, pre-hairpin intermediate state, and post-fusion hairpin state. During viral and target cell membrane fusion, the coiled coil regions (heptad repeats) assume a trimer-of-hairpins structure, positioning the fusion peptide in close proximity to the C-terminal region of the ectodomain. The formation of this structure appears to drive apposition and subsequent fusion of viral and target cell membranes. Membranes fusion leads to delivery of the nucleocapsid into the cytoplasm. The polypeptide is Envelope glycoprotein (env) (Felidae (cat family)).